The primary structure comprises 269 residues: Nuclear egress protein 2 (269 aa).

Over Met-1–Asn-247 the chain is Perinuclear space. A helical transmembrane segment spans residues Val-248–Trp-268. Residue Lys-269 is a topological domain, nuclear.

It belongs to the herpesviridae NEC2 protein family. As to quaternary structure, forms a heterohexameric complex with NEC1. Post-translationally, phosphorylated.

It localises to the host nucleus inner membrane. In terms of biological role, plays an essential role in virion nuclear egress, the first step of virion release from infected cell. Within the host nucleus, NEC1 interacts with the newly formed capsid through the vertexes and directs it to the inner nuclear membrane by associating with NEC2. Induces the budding of the capsid at the inner nuclear membrane as well as its envelopment into the perinuclear space. There, the NEC1/NEC2 complex promotes the fusion of the enveloped capsid with the outer nuclear membrane and the subsequent release of the viral capsid into the cytoplasm where it will reach the secondary budding sites in the host Golgi or trans-Golgi network. The polypeptide is Nuclear egress protein 2 (Homo sapiens (Human)).